The following is a 171-amino-acid chain: MPKRPAENPEQSDDFVSKSQKKREMAERQELGTQLVNLTDSQLAKMPLDDELRDAVLLARKIRNKHEGYRRQLQFIGKLMRLRDIAPIEQALNNLKNAHQQQTSIFHEIETTRDKLLHEGDDALQEFIEEHPHADRQKLRQLIRLAEKQRAEQKPPVAARQLFVYLRELLG.

The tract at residues 1 to 30 (MPKRPAENPEQSDDFVSKSQKKREMAERQE) is disordered.

This sequence belongs to the DarP family.

It is found in the cytoplasm. Member of a network of 50S ribosomal subunit biogenesis factors which assembles along the 30S-50S interface, preventing incorrect 23S rRNA structures from forming. Promotes peptidyl transferase center (PTC) maturation. This Idiomarina loihiensis (strain ATCC BAA-735 / DSM 15497 / L2-TR) protein is Dual-action ribosomal maturation protein DarP.